A 24-amino-acid chain; its full sequence is Brevinin-1Ecb (24 aa).

An intrachain disulfide couples cysteine 18 to cysteine 24.

As to expression, expressed by the skin glands.

It localises to the secreted. In terms of biological role, shows antibacterial activity against representative Gram-negative and Gram-positive bacterial species, and hemolytic activity. The sequence is that of Brevinin-1Ecb from Pelophylax ridibundus (Marsh frog).